The chain runs to 259 residues: Cysteine protease IpaJ (259 aa).

Active-site residues include C64, H206, and D218.

It localises to the secreted. The protein resides in the host cytoplasm. Virulence factor that eliminates N-myristoyl protein modifications in infected host cells. Acts as a cysteine protease that cleaves the peptide bond between N-myristoylated Gly-2 and Asn-3 of human ARF1, leading to the elimination of the myristoyl group and alteration of protein trafficking in host cell. Could also cleave an array of N-myristoylated host proteins involved in cellular growth, signal transduction, autophagasome maturation and organelle function. This Shigella flexneri protein is Cysteine protease IpaJ (ipaJ).